The chain runs to 562 residues: 2-succinyl-5-enolpyruvyl-6-hydroxy-3-cyclohexene-1-carboxylate synthase (562 aa).

The protein belongs to the TPP enzyme family. MenD subfamily. As to quaternary structure, homodimer. Requires Mg(2+) as cofactor. Mn(2+) serves as cofactor. Thiamine diphosphate is required as a cofactor.

It carries out the reaction isochorismate + 2-oxoglutarate + H(+) = 5-enolpyruvoyl-6-hydroxy-2-succinyl-cyclohex-3-ene-1-carboxylate + CO2. It functions in the pathway quinol/quinone metabolism; 1,4-dihydroxy-2-naphthoate biosynthesis; 1,4-dihydroxy-2-naphthoate from chorismate: step 2/7. It participates in cofactor biosynthesis; phylloquinone biosynthesis. Functionally, catalyzes the thiamine diphosphate-dependent decarboxylation of 2-oxoglutarate and the subsequent addition of the resulting succinic semialdehyde-thiamine pyrophosphate anion to isochorismate to yield 2-succinyl-5-enolpyruvyl-6-hydroxy-3-cyclohexene-1-carboxylate (SEPHCHC). This Thermosynechococcus vestitus (strain NIES-2133 / IAM M-273 / BP-1) protein is 2-succinyl-5-enolpyruvyl-6-hydroxy-3-cyclohexene-1-carboxylate synthase.